Here is a 540-residue protein sequence, read N- to C-terminus: Zinc finger protein 768 (540 aa).

Disordered stretches follow at residues 1 to 166 (MERE…FEAQ) and 239 to 258 (TGAL…GQGP). A phosphoserine mark is found at serine 17, serine 18, and serine 23. Tyrosine 27 carries the post-translational modification Phosphotyrosine. Phosphoserine is present on serine 33. The segment covering 34-53 (ENEEEEISQQEGSGDYEVEE) has biased composition (acidic residues). 11 positions are modified to phosphoserine: serine 62, serine 69, serine 76, serine 83, serine 90, serine 97, serine 104, serine 107, serine 111, serine 118, and serine 125. The span at 62-77 (SPGFEPQSPEFEPQSP) shows a compositional bias: low complexity. Residues 107 to 119 (SDSQSPEFESQSP) are compositionally biased toward polar residues. Tyrosine 128 is subject to Phosphotyrosine. At serine 132 the chain carries Phosphoserine. At tyrosine 135 the chain carries Phosphotyrosine. Phosphoserine is present on serine 139. The residue at position 142 (tyrosine 142) is a Phosphotyrosine. 2 positions are modified to phosphoserine: serine 144 and serine 147. The segment covering 149-166 (YESQNTELKTQSPEFEAQ) has biased composition (polar residues). Position 158 is a phosphothreonine (threonine 158). Phosphoserine is present on serine 160. The C2H2-type 1 zinc finger occupies 261–283 (NICGICGKSFGRGSTLIQHQRIH). Threonine 284 is subject to Phosphothreonine. Phosphotyrosine is present on tyrosine 289. 4 C2H2-type zinc fingers span residues 289-311 (YKCE…QRTH), 317-339 (YKCP…QRTH), 345-367 (YKCP…QRTH), and 373-395 (YSCT…QRVH). 2 positions are modified to phosphoserine: serine 295 and serine 299. Threonine 396 carries the post-translational modification Phosphothreonine. 5 C2H2-type zinc fingers span residues 401-423 (FSCG…ARSH), 429-451 (FKCP…ARTH), 457-479 (YSCP…QRSH), 485-507 (YRCA…HRVH), and 513-535 (YKCD…QRTH). Serine 442 is subject to Phosphoserine.

Belongs to the krueppel C2H2-type zinc-finger protein family. In terms of assembly, interacts (via zinc-finger domains) with TP53 (via N-terminus); interaction might be facilitated by TP53 oligomerization state. Interacts with ELP3. In terms of processing, may be phosphorylated at residue 'Ser-5' of the tandem heptapeptide repeats in the N-terminus. Phosphorylation might be increased upon RAS pathway activation and negatively regulate protein stability.

It is found in the nucleus. The protein resides in the chromosome. In terms of biological role, binds to mammalian-wide interspersed repeat (MIRs) sequences in euchromatin and promoter regions of genes at the consensus sequence 5'-GCTGTGTG-[N20]-CCTCTCTG-3', consisting of two anchor regions connected by a linker region; the linker region probably does not contribute to the binding specificity. Required for cell homeostasis. May be involved in transcriptional regulation. This chain is Zinc finger protein 768 (ZNF768), found in Homo sapiens (Human).